Here is a 1670-residue protein sequence, read N- to C-terminus: DNA-directed RNA polymerase I subunit 1 (1670 aa).

6 residues coordinate Zn(2+): Cys-79, Cys-82, Cys-89, His-92, Cys-119, and Cys-122. Residues 154–185 (ESNTPTKSKSSDESCESVVTTDSSEECEDSDV) are disordered. Acidic residues predominate over residues 176-185 (SSEECEDSDV). The Zn(2+) site is built by Cys-213 and Cys-216. Positions 255–293 (TSSVENPDGFDDSGIDALSEVEDGDKETREKSTEVAAEF) are disordered. Residues 262-279 (DGFDDSGIDALSEVEDGD) show a composition bias toward acidic residues. The span at 280–293 (KETREKSTEVAAEF) shows a compositional bias: basic and acidic residues. Positions 602, 604, and 606 each coordinate Mg(2+). Residues 1005 to 1017 (PQEYYFHCMAGRE) form a bridging helix region. The tract at residues 1318–1437 (TGPIAGNETD…EQSKKKRRKF (120 aa)) is disordered. Composition is skewed to acidic residues over residues 1339 to 1354 (DDGD…DDLG), 1366 to 1379 (DEMD…DETN), and 1388 to 1399 (EDPEMDSENEDT). Over residues 1415-1429 (EPQKEVKGVKNVKEQ) the composition is skewed to basic and acidic residues.

The protein belongs to the RNA polymerase beta' chain family. In terms of assembly, component of the RNA polymerase I (Pol I) complex consisting of at least 13 subunits.

Its subcellular location is the nucleus. The enzyme catalyses RNA(n) + a ribonucleoside 5'-triphosphate = RNA(n+1) + diphosphate. Functionally, DNA-dependent RNA polymerase catalyzes the transcription of DNA into RNA using the four ribonucleoside triphosphates as substrates. Largest and catalytic core component of RNA polymerase I which synthesizes ribosomal RNA precursors. Forms the polymerase active center together with the second largest subunit. A single stranded DNA template strand of the promoter is positioned within the central active site cleft of Pol I. A bridging helix emanates from NRPA1 and crosses the cleft near the catalytic site and is thought to promote translocation of Pol I by acting as a ratchet that moves the RNA-DNA hybrid through the active site by switching from straight to bent conformations at each step of nucleotide addition. The protein is DNA-directed RNA polymerase I subunit 1 of Arabidopsis thaliana (Mouse-ear cress).